The chain runs to 172 residues: Small ribosomal subunit protein uS5 (172 aa).

The S5 DRBM domain maps to 17–80 (LREKMIAVNR…EEARRNMVKV (64 aa)).

This sequence belongs to the universal ribosomal protein uS5 family. As to quaternary structure, part of the 30S ribosomal subunit. Contacts proteins S4 and S8.

Its function is as follows. With S4 and S12 plays an important role in translational accuracy. Located at the back of the 30S subunit body where it stabilizes the conformation of the head with respect to the body. The sequence is that of Small ribosomal subunit protein uS5 from Verminephrobacter eiseniae (strain EF01-2).